The following is a 342-amino-acid chain: Dihydroorotase (342 aa).

Positions 13 and 15 each coordinate Zn(2+). Residues 15–17 and asparagine 41 contribute to the substrate site; that span reads HLR. Positions 98, 135, and 173 each coordinate Zn(2+). N6-carboxylysine is present on lysine 98. A substrate-binding site is contributed by histidine 135. Position 218 (leucine 218) interacts with substrate. Position 246 (aspartate 246) interacts with Zn(2+). Aspartate 246 is a catalytic residue. The substrate site is built by histidine 250 and alanine 262.

The protein belongs to the metallo-dependent hydrolases superfamily. DHOase family. Class II DHOase subfamily. As to quaternary structure, homodimer. Zn(2+) serves as cofactor.

It catalyses the reaction (S)-dihydroorotate + H2O = N-carbamoyl-L-aspartate + H(+). Its pathway is pyrimidine metabolism; UMP biosynthesis via de novo pathway; (S)-dihydroorotate from bicarbonate: step 3/3. Its function is as follows. Catalyzes the reversible cyclization of carbamoyl aspartate to dihydroorotate. This chain is Dihydroorotase, found in Aliivibrio fischeri (strain MJ11) (Vibrio fischeri).